Consider the following 163-residue polypeptide: Small ribosomal subunit protein uS5 (163 aa).

The S5 DRBM domain occupies 8–71; that stretch reads FIEKVVSLNR…EQARKAMMKI (64 aa).

Belongs to the universal ribosomal protein uS5 family. Part of the 30S ribosomal subunit. Contacts proteins S4 and S8.

In terms of biological role, with S4 and S12 plays an important role in translational accuracy. Functionally, located at the back of the 30S subunit body where it stabilizes the conformation of the head with respect to the body. The sequence is that of Small ribosomal subunit protein uS5 from Lawsonia intracellularis (strain PHE/MN1-00).